Reading from the N-terminus, the 423-residue chain is p-aminobenzoyl-glutamate hydrolase subunit A homolog (423 aa).

The protein belongs to the peptidase M20 family. Requires Mn(2+) as cofactor.

Its function is as follows. Catalyzes the cleavage of p-aminobenzoyl-glutamate (PABA-GLU) to form p-aminobenzoate (PABA) and glutamate. The sequence is that of p-aminobenzoyl-glutamate hydrolase subunit A homolog (abgA) from Haemophilus influenzae (strain ATCC 51907 / DSM 11121 / KW20 / Rd).